A 236-amino-acid polypeptide reads, in one-letter code: Probable ascorbate-specific transmembrane electron transporter 2 (236 aa).

The Cytoplasmic segment spans residues 1 to 11; sequence MAAGLGVKAAP. Residues 12-32 traverse the membrane as a helical segment; that stretch reads FTYVAHALAVAAAVMVLVWCI. In terms of domain architecture, Cytochrome b561 spans 15 to 219; the sequence is VAHALAVAAA…FGAAVVVAAV (205 aa). Residues 33-53 lie on the Extracellular side of the membrane; it reads SFRGGLAFEADNKNLIFNVHP. His52 is a binding site for heme b. A helical membrane pass occupies residues 54–74; it reads VLMLIGYIILGSEAIMIYKIF. 67–75 is a binding site for L-ascorbate; it reads AIMIYKIFP. Over 75–84 the chain is Cytoplasmic; it reads PKLNHDTTKL. Residues 85–105 traverse the membrane as a helical segment; sequence IHLILHAIAIVLGAVGIYCAF. His86 and His120 together coordinate heme b. Topologically, residues 106 to 122 are extracellular; sequence KFHNESGIANLYSLHSW. 116-125 is a binding site for monodehydro-L-ascorbate radical; that stretch reads LYSLHSWLGI. A helical membrane pass occupies residues 123-143; that stretch reads LGIGTISLYGIQWIFGFVAFF. At 144–153 the chain is on the cytoplasmic side; sequence YPGAAPHVRR. A helical transmembrane segment spans residues 154–174; sequence GALPWHVLFGLFVYVLTLATA. His159 is a heme b binding site. Topologically, residues 175-196 are extracellular; that stretch reads ELGLLEKLTFLQSSGLDKYGAE. A helical transmembrane segment spans residues 197–217; that stretch reads AFLVNFTGLVVALFGAAVVVA. Topologically, residues 218 to 236 are cytoplasmic; it reads AVAPAHVEEPEGYAPIPVN.

Heme b is required as a cofactor.

Its subcellular location is the membrane. In terms of biological role, two-heme-containing cytochrome. Catalyzes ascorbate-dependent trans-membrane electron transfer by utilizing a concerted H(+)/e(-) transfer mechanism. This Oryza sativa subsp. japonica (Rice) protein is Probable ascorbate-specific transmembrane electron transporter 2.